The chain runs to 192 residues: dTTP/UTP pyrophosphatase (192 aa).

Aspartate 75 functions as the Proton acceptor in the catalytic mechanism.

Belongs to the Maf family. YhdE subfamily. It depends on a divalent metal cation as a cofactor.

Its subcellular location is the cytoplasm. It catalyses the reaction dTTP + H2O = dTMP + diphosphate + H(+). The catalysed reaction is UTP + H2O = UMP + diphosphate + H(+). In terms of biological role, nucleoside triphosphate pyrophosphatase that hydrolyzes dTTP and UTP. May have a dual role in cell division arrest and in preventing the incorporation of modified nucleotides into cellular nucleic acids. The sequence is that of dTTP/UTP pyrophosphatase from Pelodictyon phaeoclathratiforme (strain DSM 5477 / BU-1).